Reading from the N-terminus, the 473-residue chain is H(+)/Cl(-) exchange transporter ClcA (473 aa).

Over 1–32 the chain is Cytoplasmic; sequence MKTDTSTFLAQQIVRLRRRDQIRRLMQRDKTP. Residues 33 to 69 traverse the membrane as a helical segment; the sequence is LAILFMAAVVGTLTGLVGVAFEKAVSWVQNMRIGALV. Residues 70–76 lie on the Periplasmic side of the membrane; sequence QVADHAF. Residues 77-100 form a helical membrane-spanning segment; the sequence is LLWPLAFILSALLAMVGYFLVRKF. A Selectivity filter part_1 motif is present at residues 106–110; the sequence is GSGIP. S107 is a chloride binding site. An intramembrane region (helical) is located at residues 109–116; that stretch reads IPEIEGAL. The Cytoplasmic portion of the chain corresponds to 117–123; sequence EELRPVR. The next 2 membrane-spanning stretches (helical) occupy residues 124–141 and 148–166; these read WWRVLPVKFIGGMGTLGA and EGPTVQIGGNLGRMVLDVF. Residues 146 to 150 carry the Selectivity filter part_2 motif; sequence GREGP. The Cytoplasmic portion of the chain corresponds to 167–176; that stretch reads RMRSAEARHT. 2 intramembrane regions (helical) span residues 177–189 and 193–201; these read LLATGAAAGLSAA and PLAGILFII. Residues 202 to 214 lie on the Cytoplasmic side of the membrane; sequence EEMRPQFRYNLIS. A helical membrane pass occupies residues 215–232; it reads IKAVFTGVIMSSIVFRIF. The Periplasmic segment spans residues 233–252; the sequence is NGEAPIIEVGKLSDAPVNTL. Residues 253–281 form a helical membrane-spanning segment; that stretch reads WLYLILGIIFGCVGPVFNSLVLRTQDMFQ. Over 282-287 the chain is Cytoplasmic; that stretch reads RFHGGE. The chain crosses the membrane as a helical span at residues 288-309; the sequence is IKKWVLMGGAIGGLCGILGLIE. Topologically, residues 310-329 are periplasmic; the sequence is PEAAGGGFNLIPIAAAGNFS. 2 helical membrane passes run 330 to 349 and 355 to 376; these read VGLLLFIFIARVVTTLLCFS and GIFAPMLALGTLLGTAFGMAAA. The Selectivity filter part_3 signature appears at 355–359; it reads GIFAP. Positions 356 and 357 each coordinate chloride. Over 377–386 the chain is Periplasmic; the sequence is VLFPQYHLEA. The helical intramembrane region spans 387 to 401; it reads GTFAIAGMGALMAAS. An intramembrane region (note=Loop between two helices) is located at residues 402-404; the sequence is VRA. The segment at residues 405–416 is an intramembrane region (helical); sequence PLTGIVLVLEMT. Positions 417–421 form an intramembrane region, note=Loop between two helices; the sequence is DNYQL. A helical transmembrane segment spans residues 422–438; the sequence is ILPMIITCLGATLLAQF. Residues 439–473 are Cytoplasmic-facing; it reads LGGKPLYSTILARTLAKQDAEQAAKSQNAPAGENT. Y445 is a chloride binding site.

It belongs to the chloride channel (TC 2.A.49) family. ClcA subfamily. As to quaternary structure, homodimer.

It localises to the cell inner membrane. It catalyses the reaction 2 chloride(in) + H(+)(out) = 2 chloride(out) + H(+)(in). In terms of biological role, proton-coupled chloride transporter. Functions as antiport system and exchanges two chloride ions for 1 proton. Probably acts as an electrical shunt for an outwardly-directed proton pump that is linked to amino acid decarboxylation, as part of the extreme acid resistance (XAR) response. The polypeptide is H(+)/Cl(-) exchange transporter ClcA (Salmonella gallinarum (strain 287/91 / NCTC 13346)).